The following is a 599-amino-acid chain: Aspartate--tRNA(Asp/Asn) ligase (599 aa).

Glutamate 172 contributes to the L-aspartate binding site. An aspartate region spans residues 196–199 (QLFK). Arginine 218 contributes to the L-aspartate binding site. Residues 218–220 (RDE) and glutamine 227 contribute to the ATP site. Histidine 455 lines the L-aspartate pocket. An ATP-binding site is contributed by glutamate 489. Residue arginine 496 participates in L-aspartate binding. 541-544 (GLDR) lines the ATP pocket.

The protein belongs to the class-II aminoacyl-tRNA synthetase family. Type 1 subfamily. In terms of assembly, homodimer.

It localises to the cytoplasm. The catalysed reaction is tRNA(Asx) + L-aspartate + ATP = L-aspartyl-tRNA(Asx) + AMP + diphosphate. Its function is as follows. Aspartyl-tRNA synthetase with relaxed tRNA specificity since it is able to aspartylate not only its cognate tRNA(Asp) but also tRNA(Asn). Reaction proceeds in two steps: L-aspartate is first activated by ATP to form Asp-AMP and then transferred to the acceptor end of tRNA(Asp/Asn). The protein is Aspartate--tRNA(Asp/Asn) ligase of Herminiimonas arsenicoxydans.